The primary structure comprises 349 residues: Ion-translocating oxidoreductase complex subunit D (349 aa).

3 consecutive transmembrane segments (helical) span residues 36–56 (CAFFGWGTLIQVLLAIIVALS), 77–99 (SAMLTAILIGVAIPPLAPWWMIV), and 124–144 (AMAAYVLLLVSFPLQMTTWIA). Thr185 is subject to FMN phosphoryl threonine. A run of 5 helical transmembrane segments spans residues 212 to 232 (STGVGWFWVNLAYLAGGIVLL), 239 to 259 (WHISTGVLAGLFVASSVGFLL), 265 to 285 (ASPLFHLFSGATMLAAFFIAT), 291 to 311 (ATSPRGRIIFGALIGVLVYII), and 315 to 335 (GGYPDAFAFAVLLANLCAPFI).

The protein belongs to the NqrB/RnfD family. As to quaternary structure, the complex is composed of six subunits: RnfA, RnfB, RnfC, RnfD, RnfE and RnfG. The cofactor is FMN.

It is found in the cell inner membrane. Part of a membrane-bound complex that couples electron transfer with translocation of ions across the membrane. In Shewanella oneidensis (strain ATCC 700550 / JCM 31522 / CIP 106686 / LMG 19005 / NCIMB 14063 / MR-1), this protein is Ion-translocating oxidoreductase complex subunit D.